The following is a 349-amino-acid chain: Putative nuclease HARBI1 (349 aa).

The 153-residue stretch at Val148–Asn300 folds into the DDE Tnp4 domain. Residues Asp149, Asp199, Asp225, and Glu261 each coordinate a divalent metal cation.

Belongs to the HARBI1 family. In terms of assembly, interacts with NAIF1. A divalent metal cation is required as a cofactor.

Its subcellular location is the nucleus. The protein resides in the cytoplasm. Functionally, transposase-derived protein that may have nuclease activity (Potential). Does not have transposase activity. The chain is Putative nuclease HARBI1 (Harbi1) from Rattus norvegicus (Rat).